Here is a 418-residue protein sequence, read N- to C-terminus: Protease LasA (418 aa).

A signal peptide spans 1-31 (MQHKRSRAMASPRSPFLFVLLALAVGGTANA). The propeptide occupies 32–236 (HDDGLPAFRY…ARQLQAKAAL (205 aa)). Positions 259 and 272 each coordinate Zn(2+). Cys-301 and Cys-347 form a disulfide bridge. Catalysis depends on proton donor/acceptor residues His-317 and His-356. Zn(2+) is bound at residue His-358. Cys-391 and Cys-406 form a disulfide bridge.

The protein belongs to the peptidase M23A family. Zn(2+) serves as cofactor. Processing of pro-LasA can occur extracellularly and requires elastase (lasB). Secretion and processing may be linked.

It localises to the secreted. Its function is as follows. Involved in proteolysis and elastolysis (degradation of the host protein elastin). Has staphylolytic activity (degrades pentaglycine cross-links in cell wall peptidoglycan), preferring Gly-Gly-|-X substrates where X is Ala or Gly. Enhances the elastolytic but not proteolytic activity of elastase (lasB) and elastolytic activity of other proteases. Degradation of host elastin is likely to contribute to the pathogenicity of P.aeruginosa. While either His-317 or His-356 can abstract a proton in the hydrolysis reaction, the same residue performs both functions in a given catalytic cycle, with the other stabilizing the catalytic intermediate. The sequence is that of Protease LasA (lasA) from Pseudomonas aeruginosa (strain ATCC 15692 / DSM 22644 / CIP 104116 / JCM 14847 / LMG 12228 / 1C / PRS 101 / PAO1).